A 218-amino-acid chain; its full sequence is Cytidylate kinase (218 aa).

7 to 15 serves as a coordination point for ATP; sequence GPSASGKSS.

It belongs to the cytidylate kinase family. Type 1 subfamily.

The protein localises to the cytoplasm. It catalyses the reaction CMP + ATP = CDP + ADP. The enzyme catalyses dCMP + ATP = dCDP + ADP. In Borrelia duttonii (strain Ly), this protein is Cytidylate kinase.